Reading from the N-terminus, the 842-residue chain is DNA gyrase subunit A (842 aa).

The region spanning 42–511 (LPEVRDGLKP…ADGEVSDEDL (470 aa)) is the Topo IIA-type catalytic domain. Tyr-130 acts as the O-(5'-phospho-DNA)-tyrosine intermediate in catalysis. The GyrA-box motif lies at 538–544 (QKRGGKG). A disordered region spans residues 822–842 (EDEAAESISESDADTAESPEA).

This sequence belongs to the type II topoisomerase GyrA/ParC subunit family. Heterotetramer, composed of two GyrA and two GyrB chains. In the heterotetramer, GyrA contains the active site tyrosine that forms a transient covalent intermediate with DNA, while GyrB binds cofactors and catalyzes ATP hydrolysis.

It is found in the cytoplasm. It carries out the reaction ATP-dependent breakage, passage and rejoining of double-stranded DNA.. With respect to regulation, inhibited by 4-quinoline drugs (nalidixic acid, ciprofloxacin, ofloxacin), although it is much less sensitive than the corresponding enzyme from E.coli. A type II topoisomerase that negatively supercoils closed circular double-stranded (ds) DNA in an ATP-dependent manner to modulate DNA topology and maintain chromosomes in an underwound state. Negative supercoiling favors strand separation, and DNA replication, transcription, recombination and repair, all of which involve strand separation. Also able to catalyze the interconversion of other topological isomers of dsDNA rings, including catenanes and knotted rings. Type II topoisomerases break and join 2 DNA strands simultaneously in an ATP-dependent manner. This chain is DNA gyrase subunit A, found in Mycolicibacterium smegmatis (strain ATCC 700084 / mc(2)155) (Mycobacterium smegmatis).